The sequence spans 727 residues: Alpha-1,3-galactosidase A (727 aa).

The segment at 220–241 (ATNRTWRTSNPVFPERHEDHRP) is disordered. Polar residues predominate over residues 221–230 (TNRTWRTSNP). PbH1 repeat units lie at residues 336-358 (KGTV…NIHG), 461-483 (TPTV…LVTT), 484-506 (RRPV…YISS), 517-538 (VRNV…IFFD), 551-572 (HRNV…LSGR), and 574-603 (VGGL…RVGD).

The protein belongs to the glycosyl hydrolase 110 family. A subfamily.

The catalysed reaction is Hydrolysis of terminal, non-reducing branched (1-&gt;3)-alpha-D-galactosidic residues, producing free D-galactose.. It catalyses the reaction Hydrolysis of terminal, non-reducing alpha-D-galactose residues in alpha-D-galactosides, including galactose oligosaccharides, galactomannans and galactolipids.. Its function is as follows. Alpha-galactosidase that specifically removes branched alpha-1,3-linked galactose residues present in blood group B antigens. Has no activity toward linear alpha-1,3-linked galactose residues. The protein is Alpha-1,3-galactosidase A (glaA) of Peterkaempfera griseoplana (Streptacidiphilus griseoplanus).